A 347-amino-acid polypeptide reads, in one-letter code: Aromatic amino acid aminotransferase (347 aa).

Lys214 bears the N6-(pyridoxal phosphate)lysine mark.

Belongs to the class-II pyridoxal-phosphate-dependent aminotransferase family. In terms of assembly, homodimer. The cofactor is pyridoxal 5'-phosphate.

It carries out the reaction an aromatic L-alpha-amino acid + 2-oxoglutarate = an aromatic oxo-acid + L-glutamate. Its function is as follows. Aminotransferase that catalyzes the conversion of aromatic amino acids and 2-oxoglutarate into corresponding aromatic oxo acids and L-glutamate. This chain is Aromatic amino acid aminotransferase, found in Mycobacteroides abscessus (strain ATCC 19977 / DSM 44196 / CCUG 20993 / CIP 104536 / JCM 13569 / NCTC 13031 / TMC 1543 / L948) (Mycobacterium abscessus).